The following is a 358-amino-acid chain: UDP-N-acetylglucosamine--N-acetylmuramyl-(pentapeptide) pyrophosphoryl-undecaprenol N-acetylglucosamine transferase (358 aa).

Residues 12 to 14, Arg165, Ser195, and Gln290 contribute to the UDP-N-acetyl-alpha-D-glucosamine site; that span reads TAG.

Belongs to the glycosyltransferase 28 family. MurG subfamily.

It is found in the cell membrane. It carries out the reaction di-trans,octa-cis-undecaprenyl diphospho-N-acetyl-alpha-D-muramoyl-L-alanyl-D-glutamyl-meso-2,6-diaminopimeloyl-D-alanyl-D-alanine + UDP-N-acetyl-alpha-D-glucosamine = di-trans,octa-cis-undecaprenyl diphospho-[N-acetyl-alpha-D-glucosaminyl-(1-&gt;4)]-N-acetyl-alpha-D-muramoyl-L-alanyl-D-glutamyl-meso-2,6-diaminopimeloyl-D-alanyl-D-alanine + UDP + H(+). Its pathway is cell wall biogenesis; peptidoglycan biosynthesis. Its function is as follows. Cell wall formation. Catalyzes the transfer of a GlcNAc subunit on undecaprenyl-pyrophosphoryl-MurNAc-pentapeptide (lipid intermediate I) to form undecaprenyl-pyrophosphoryl-MurNAc-(pentapeptide)GlcNAc (lipid intermediate II). This Clostridium tetani (strain Massachusetts / E88) protein is UDP-N-acetylglucosamine--N-acetylmuramyl-(pentapeptide) pyrophosphoryl-undecaprenol N-acetylglucosamine transferase.